A 283-amino-acid polypeptide reads, in one-letter code: E3 ubiquitin-protein ligase SGR9, amyloplastic (283 aa).

The transit peptide at 1–32 (MEDENTTIIMASLSALSPSHLTNLTHSILSIS) directs the protein to the amyloplast. The segment at 214 to 255 (CVICKEEMSEGRDVCEMPCQHFFHWKCILPWLSKKNTCPFCR) adopts an RING-type; atypical zinc-finger fold.

In terms of processing, auto-ubiquitinated as part of the enzymatic reaction. As to expression, expressed in seedlings, hypocotyls, roots and stems. Present especially in hypocotyl and inflorescence endodermis, as well as in root cap columella, tissues that act as statocytes.

It is found in the plastid. Its subcellular location is the amyloplast. The enzyme catalyses S-ubiquitinyl-[E2 ubiquitin-conjugating enzyme]-L-cysteine + [acceptor protein]-L-lysine = [E2 ubiquitin-conjugating enzyme]-L-cysteine + N(6)-ubiquitinyl-[acceptor protein]-L-lysine.. The protein operates within protein modification; protein ubiquitination. In terms of biological role, E3 ubiquitin-protein ligase which accepts ubiquitin from an E2 ubiquitin-conjugating enzyme in the form of a thioester and then directly transfers the ubiquitin to targeted substrates. Modulates amyloplast dynamics and sedimentation in statocytes during inflorescence, hypocotyl and root gravitropism, probably by regulating amyloplast interaction with actin filaments (AFs) in endodermal cells. The protein is E3 ubiquitin-protein ligase SGR9, amyloplastic (SGR9) of Arabidopsis thaliana (Mouse-ear cress).